The following is a 94-amino-acid chain: Long neurotoxin LNTX8 (94 aa).

The first 21 residues, 1–21 (MKTLLLTLVVVTIMCLDLGYT), serve as a signal peptide directing secretion. 5 cysteine pairs are disulfide-bonded: Cys-24–Cys-43, Cys-36–Cys-64, Cys-49–Cys-53, Cys-68–Cys-79, and Cys-80–Cys-85.

Belongs to the three-finger toxin family. Long-chain subfamily. Type II alpha-neurotoxin sub-subfamily. Expressed by the venom gland.

Its subcellular location is the secreted. Binds with high affinity to muscular (alpha-1/CHRNA1) and neuronal (alpha-7/CHRNA7) nicotinic acetylcholine receptor (nAChR) and inhibits acetylcholine from binding to the receptor, thereby impairing neuromuscular and neuronal transmission. The sequence is that of Long neurotoxin LNTX8 from Ophiophagus hannah (King cobra).